Reading from the N-terminus, the 218-residue chain is Octanoyltransferase (218 aa).

The BPL/LPL catalytic domain occupies 31–206 (EETPDEVWLV…ELVNLLGYEQ (176 aa)). Residues 70-77 (RGGQVTYH), 137-139 (SLG), and 150-152 (GLA) contribute to the substrate site. Catalysis depends on C168, which acts as the Acyl-thioester intermediate.

It belongs to the LipB family.

The protein localises to the cytoplasm. The catalysed reaction is octanoyl-[ACP] + L-lysyl-[protein] = N(6)-octanoyl-L-lysyl-[protein] + holo-[ACP] + H(+). The protein operates within protein modification; protein lipoylation via endogenous pathway; protein N(6)-(lipoyl)lysine from octanoyl-[acyl-carrier-protein]: step 1/2. In terms of biological role, catalyzes the transfer of endogenously produced octanoic acid from octanoyl-acyl-carrier-protein onto the lipoyl domains of lipoate-dependent enzymes. Lipoyl-ACP can also act as a substrate although octanoyl-ACP is likely to be the physiological substrate. This Vibrio vulnificus (strain YJ016) protein is Octanoyltransferase.